Here is a 408-residue protein sequence, read N- to C-terminus: Phosphoglycerate kinase (408 aa).

Substrate-binding positions include 24 to 26 (DLN), arginine 39, 62 to 65 (HLGR), arginine 121, and arginine 161. ATP-binding positions include lysine 211, glycine 307, glutamate 338, and 364 to 367 (GGDS).

This sequence belongs to the phosphoglycerate kinase family. In terms of assembly, monomer.

It localises to the cytoplasm. It catalyses the reaction (2R)-3-phosphoglycerate + ATP = (2R)-3-phospho-glyceroyl phosphate + ADP. It participates in carbohydrate degradation; glycolysis; pyruvate from D-glyceraldehyde 3-phosphate: step 2/5. The protein is Phosphoglycerate kinase of Paenarthrobacter aurescens (strain TC1).